A 238-amino-acid chain; its full sequence is Purine nucleoside phosphorylase DeoD-type (238 aa).

His5 provides a ligand contact to a purine D-ribonucleoside. Residues Gly21, Arg25, Arg44, and 88–91 (RIGT) each bind phosphate. A purine D-ribonucleoside contacts are provided by residues 180–182 (DME) and 204–205 (SD). The Proton donor role is filled by Asp205.

It belongs to the PNP/UDP phosphorylase family. As to quaternary structure, homohexamer; trimer of homodimers.

It catalyses the reaction a purine D-ribonucleoside + phosphate = a purine nucleobase + alpha-D-ribose 1-phosphate. It carries out the reaction a purine 2'-deoxy-D-ribonucleoside + phosphate = a purine nucleobase + 2-deoxy-alpha-D-ribose 1-phosphate. Functionally, catalyzes the reversible phosphorolytic breakdown of the N-glycosidic bond in the beta-(deoxy)ribonucleoside molecules, with the formation of the corresponding free purine bases and pentose-1-phosphate. This chain is Purine nucleoside phosphorylase DeoD-type, found in Buchnera aphidicola subsp. Baizongia pistaciae (strain Bp).